The sequence spans 167 residues: Crossover junction endodeoxyribonuclease RuvC (167 aa).

Residues Asp8, Glu67, and Asp139 contribute to the active site. 3 residues coordinate Mg(2+): Asp8, Glu67, and Asp139.

It belongs to the RuvC family. As to quaternary structure, homodimer which binds Holliday junction (HJ) DNA. The HJ becomes 2-fold symmetrical on binding to RuvC with unstacked arms; it has a different conformation from HJ DNA in complex with RuvA. In the full resolvosome a probable DNA-RuvA(4)-RuvB(12)-RuvC(2) complex forms which resolves the HJ. Requires Mg(2+) as cofactor.

It localises to the cytoplasm. The catalysed reaction is Endonucleolytic cleavage at a junction such as a reciprocal single-stranded crossover between two homologous DNA duplexes (Holliday junction).. In terms of biological role, the RuvA-RuvB-RuvC complex processes Holliday junction (HJ) DNA during genetic recombination and DNA repair. Endonuclease that resolves HJ intermediates. Cleaves cruciform DNA by making single-stranded nicks across the HJ at symmetrical positions within the homologous arms, yielding a 5'-phosphate and a 3'-hydroxyl group; requires a central core of homology in the junction. The consensus cleavage sequence is 5'-(A/T)TT(C/G)-3'. Cleavage occurs on the 3'-side of the TT dinucleotide at the point of strand exchange. HJ branch migration catalyzed by RuvA-RuvB allows RuvC to scan DNA until it finds its consensus sequence, where it cleaves and resolves the cruciform DNA. This chain is Crossover junction endodeoxyribonuclease RuvC, found in Halorhodospira halophila (strain DSM 244 / SL1) (Ectothiorhodospira halophila (strain DSM 244 / SL1)).